Reading from the N-terminus, the 389-residue chain is PqqA peptide cyclase (389 aa).

In terms of domain architecture, Radical SAM core spans 19-234 (VGLPLWLLAE…TNEYRDQLAA (216 aa)). Residues Cys-33, Cys-37, and Cys-40 each coordinate [4Fe-4S] cluster.

It belongs to the radical SAM superfamily. PqqE family. Interacts with PqqD. The interaction is necessary for activity of PqqE. [4Fe-4S] cluster serves as cofactor.

The catalysed reaction is [PQQ precursor protein] + S-adenosyl-L-methionine = E-Y cross-linked-[PQQ precursor protein] + 5'-deoxyadenosine + L-methionine + H(+). It participates in cofactor biosynthesis; pyrroloquinoline quinone biosynthesis. Catalyzes the cross-linking of a glutamate residue and a tyrosine residue in the PqqA protein as part of the biosynthesis of pyrroloquinoline quinone (PQQ). The chain is PqqA peptide cyclase from Pseudomonas syringae pv. tomato (strain ATCC BAA-871 / DC3000).